Consider the following 215-residue polypeptide: Nitrate/nitrite response regulator protein NarP (215 aa).

Positions 8 to 124 (QVMIVDDHPL…VLLEAIRAGA (117 aa)) constitute a Response regulatory domain. Aspartate 59 carries the 4-aspartylphosphate modification. The region spanning 147–212 (EEDPFSVLTE…AATILFLQQR (66 aa)) is the HTH luxR-type domain. A DNA-binding region (H-T-H motif) is located at residues 171 to 190 (NKQIASVLNISEQTVKVHIR).

This protein activates the expression of the nitrate reductase (narGHJI) and formate dehydrogenase-N (fdnGHI) operons and represses the transcription of the fumarate reductase (frdABCD) operon in response to a nitrate/nitrite induction signal transmitted by either the NarX or NarQ proteins. This Escherichia coli (strain K12) protein is Nitrate/nitrite response regulator protein NarP (narP).